The primary structure comprises 424 residues: Phosphoribosylamine--glycine ligase (424 aa).

Residues 111–312 (KAFVKECGIK…LLDLCLATAK (202 aa)) form the ATP-grasp domain. 137–189 (IQNASFPLVIKALNKNTSIVYQEEEAIKILEDAFKQSNEPVIIEPFLEGFELS) contacts ATP.

This sequence belongs to the GARS family.

The catalysed reaction is 5-phospho-beta-D-ribosylamine + glycine + ATP = N(1)-(5-phospho-beta-D-ribosyl)glycinamide + ADP + phosphate + H(+). It participates in purine metabolism; IMP biosynthesis via de novo pathway; N(1)-(5-phospho-D-ribosyl)glycinamide from 5-phospho-alpha-D-ribose 1-diphosphate: step 2/2. This chain is Phosphoribosylamine--glycine ligase (purD), found in Helicobacter pylori (strain ATCC 700392 / 26695) (Campylobacter pylori).